An 809-amino-acid chain; its full sequence is TLR4 interactor with leucine rich repeats (809 aa).

The signal sequence occupies residues methionine 1–serine 25. One can recognise an LRRNT domain in the interval valine 26–serine 57. The Extracellular portion of the chain corresponds to valine 26–glutamine 694. LRR repeat units lie at residues valine 61 to arginine 81, glutamine 84 to lysine 105, arginine 108 to proline 129, lysine 132 to glycine 153, serine 156 to proline 177, asparagine 180 to glutamine 201, lysine 204 to alanine 223, serine 230 to histidine 251, arginine 254 to glycine 275, alanine 278 to glutamate 298, serine 302 to histidine 323, and arginine 326 to alanine 347. An N-linked (GlcNAc...) asparagine glycan is attached at asparagine 73. Residues asparagine 359–aspartate 416 form the LRRCT domain. Asparagine 411 carries N-linked (GlcNAc...) asparagine glycosylation. Disordered regions lie at residues glycine 412 to leucine 462 and arginine 483 to glutamine 563. The segment covering proline 421–glutamate 436 has biased composition (polar residues). The segment covering glycine 488–serine 506 has biased composition (low complexity). The segment covering alanine 521–aspartate 543 has biased composition (polar residues). A compositionally biased stretch (low complexity) spans alanine 554–glutamine 563. A glycan (N-linked (GlcNAc...) asparagine) is linked at asparagine 587. Residues leucine 695–tryptophan 715 form a helical membrane-spanning segment. Residues glycine 716–aspartate 809 are Cytoplasmic-facing. Serine 796 carries the post-translational modification Phosphoserine.

Belongs to the lipopolysaccharide (LPS) receptor, a multi-protein complex containing at least CD14, MD-2 and TLR4. Interacts with TLR4; this interaction is greatly enhanced by LPS stimulation. Interacts with LPS. N-glycolysaled. In terms of tissue distribution, highly expressed in brain, spinal cord and lung.

It localises to the membrane. Its function is as follows. Component of the TLR4 signaling complex. Mediates the innate immune response to bacterial lipopolysaccharide (LPS) leading to cytokine secretion. In Mus musculus (Mouse), this protein is TLR4 interactor with leucine rich repeats (Tril).